Reading from the N-terminus, the 248-residue chain is 1-(5-phosphoribosyl)-5-[(5-phosphoribosylamino)methylideneamino] imidazole-4-carboxamide isomerase (248 aa).

Asp8 (proton acceptor) is an active-site residue. Residue Asp131 is the Proton donor of the active site.

Belongs to the HisA/HisF family.

The protein resides in the cytoplasm. The enzyme catalyses 1-(5-phospho-beta-D-ribosyl)-5-[(5-phospho-beta-D-ribosylamino)methylideneamino]imidazole-4-carboxamide = 5-[(5-phospho-1-deoxy-D-ribulos-1-ylimino)methylamino]-1-(5-phospho-beta-D-ribosyl)imidazole-4-carboxamide. It participates in amino-acid biosynthesis; L-histidine biosynthesis; L-histidine from 5-phospho-alpha-D-ribose 1-diphosphate: step 4/9. The protein is 1-(5-phosphoribosyl)-5-[(5-phosphoribosylamino)methylideneamino] imidazole-4-carboxamide isomerase of Cupriavidus necator (strain ATCC 17699 / DSM 428 / KCTC 22496 / NCIMB 10442 / H16 / Stanier 337) (Ralstonia eutropha).